A 121-amino-acid polypeptide reads, in one-letter code: U15-barytoxin-Tl1a (121 aa).

An N-terminal signal peptide occupies residues 1–17 (MKLSVIVLVASFGFAVA). 4 disulfides stabilise this stretch: Cys56–Cys74, Cys67–Cys80, Cys71–Cys119, and Cys73–Cys90.

It belongs to the neurotoxin 03 (Tx2) family. 03 subfamily. In terms of tissue distribution, expressed by the venom gland.

Its subcellular location is the secreted. Ion channel inhibitor. The chain is U15-barytoxin-Tl1a from Trittame loki (Brush-footed trapdoor spider).